We begin with the raw amino-acid sequence, 358 residues long: Phosphoribosylformylglycinamidine cyclo-ligase (358 aa).

The protein belongs to the AIR synthase family.

Its subcellular location is the cytoplasm. It carries out the reaction 2-formamido-N(1)-(5-O-phospho-beta-D-ribosyl)acetamidine + ATP = 5-amino-1-(5-phospho-beta-D-ribosyl)imidazole + ADP + phosphate + H(+). It functions in the pathway purine metabolism; IMP biosynthesis via de novo pathway; 5-amino-1-(5-phospho-D-ribosyl)imidazole from N(2)-formyl-N(1)-(5-phospho-D-ribosyl)glycinamide: step 2/2. The chain is Phosphoribosylformylglycinamidine cyclo-ligase from Chromohalobacter salexigens (strain ATCC BAA-138 / DSM 3043 / CIP 106854 / NCIMB 13768 / 1H11).